The following is a 114-amino-acid chain: UPF0339 protein plu2779 (114 aa).

Tandem repeats lie at residues 11 to 59 (TKNK…NFEI) and 62 to 110 (NKSG…VRDL).

The protein belongs to the UPF0339 family. Duplicated subfamily.

This Photorhabdus laumondii subsp. laumondii (strain DSM 15139 / CIP 105565 / TT01) (Photorhabdus luminescens subsp. laumondii) protein is UPF0339 protein plu2779.